An 892-amino-acid polypeptide reads, in one-letter code: MTQYTPMIQQYLKVKADYQDAFLFFRLGDFYEMFFEDAVKAAHELEITLTSRDGGSSERIPMCGVPYHAAKNYIEQLVEKGYKVAVCEQVEDPKTAKGVVRREVVQLITPGTMMEGRTIDEKENNFLAALTHFEDGSYALACNDLTTGQNTVTLLTGSVEDILLEVYATGSKEIVVDSSFSKDELNKLTETLKMTISYEDATAIPEGLEHLVKNVSQAKLIKAVGRLFNYVIRTQKRSLDHLQPVEIYYTNQFMKIDVHSKRNLELTETLRTKEKTGSLLWLLDKTKTAMGGRMLKQWMERPLIQKERIEERLEMVETFVNDYFLREDLKEKLKEVYDLERLAGKVAFGNVNARDLLQLRRSLLQVPAILEAISLLDNAYAARLIQGADPCESLTELLGRSIQENPPLSIKDGDIIKDGYNDKLDQYRYVSKNGKTWIAELEKRERDITGIKSLKIGYNRIFGYYIEVTKANLGALPEGRYERKQTLANAERFITDELKEKETLILEAEEKIVQLEYDLFTALREEVKVFIPKLQHLAKVISELDVLQSFATVSEEEQFVKPVLTTKREIFIKDGRHPVVEKVLNGKLYVPNDCIMPENMDVFLITGPNMSGKSTYMRQLALVTVMSQIGCFVPATEAVLPVFDQIFTRIGAADDLISGQSTFMVEMLEAKNAIANASERSLILFDEIGRGTSTYDGMALAQAIIEHIHDQIGAKTLFSTHYHELTVLEDSLDQLKNVHVSAIEENGKVVFLHKIQDGAADKSYGIHVAQLAELPDSLITRAKEVLAQLEGQEEIIIPKRVEVKAQAQEVIPEPVVVKEEPVEIEETKAETEEESQLSFFGGEQSSKKQDKPVLDAKETAVLTQIKKIDLLDMTPLEAMNELYRLQKKLKKG.

Glycine 607–serine 614 is an ATP binding site. Residues glutamate 826–leucine 854 form a disordered region. The span at serine 845–leucine 854 shows a compositional bias: basic and acidic residues.

The protein belongs to the DNA mismatch repair MutS family.

This protein is involved in the repair of mismatches in DNA. It is possible that it carries out the mismatch recognition step. This protein has a weak ATPase activity. The polypeptide is DNA mismatch repair protein MutS (Bacillus cereus (strain AH187)).